The chain runs to 435 residues: 3-ketoacyl-CoA thiolase (435 aa).

The active-site Acyl-thioester intermediate is the C98. Active-site proton acceptor residues include H391 and C421.

It belongs to the thiolase-like superfamily. Thiolase family. In terms of assembly, heterotetramer of two alpha chains (FadJ) and two beta chains (FadI).

The protein localises to the cytoplasm. The catalysed reaction is an acyl-CoA + acetyl-CoA = a 3-oxoacyl-CoA + CoA. It functions in the pathway lipid metabolism; fatty acid beta-oxidation. In terms of biological role, catalyzes the final step of fatty acid oxidation in which acetyl-CoA is released and the CoA ester of a fatty acid two carbons shorter is formed. The chain is 3-ketoacyl-CoA thiolase from Vibrio vulnificus (strain YJ016).